Consider the following 224-residue polypeptide: ATP synthase subunit a (224 aa).

A run of 6 helical transmembrane segments spans residues 17–37 (LSLN…IYWL), 72–92 (IFIS…FPYI), 99–119 (LTLT…YGWI), 125–145 (MFAH…MVCI), 155–175 (GTLA…LTLL), and 184–204 (YLLV…ESAV).

It belongs to the ATPase A chain family. F-type ATPases have 2 components, CF(1) - the catalytic core - and CF(0) - the membrane proton channel. CF(1) has five subunits: alpha(3), beta(3), gamma(1), delta(1), epsilon(1). CF(0) has three main subunits: a, b and c.

Its subcellular location is the mitochondrion inner membrane. Mitochondrial membrane ATP synthase (F(1)F(0) ATP synthase or Complex V) produces ATP from ADP in the presence of a proton gradient across the membrane which is generated by electron transport complexes of the respiratory chain. F-type ATPases consist of two structural domains, F(1) - containing the extramembraneous catalytic core and F(0) - containing the membrane proton channel, linked together by a central stalk and a peripheral stalk. During catalysis, ATP synthesis in the catalytic domain of F(1) is coupled via a rotary mechanism of the central stalk subunits to proton translocation. Key component of the proton channel; it may play a direct role in the translocation of protons across the membrane. The sequence is that of ATP synthase subunit a (mt:ATPase6) from Drosophila yakuba (Fruit fly).